The chain runs to 80 residues: Small ribosomal subunit protein bS18 (80 aa).

It belongs to the bacterial ribosomal protein bS18 family. In terms of assembly, part of the 30S ribosomal subunit. Forms a tight heterodimer with protein bS6.

Functionally, binds as a heterodimer with protein bS6 to the central domain of the 16S rRNA, where it helps stabilize the platform of the 30S subunit. This Acholeplasma laidlawii (strain PG-8A) protein is Small ribosomal subunit protein bS18.